The following is a 172-amino-acid chain: Large ribosomal subunit protein uL10 (172 aa).

Belongs to the universal ribosomal protein uL10 family. In terms of assembly, part of the ribosomal stalk of the 50S ribosomal subunit. The N-terminus interacts with L11 and the large rRNA to form the base of the stalk. The C-terminus forms an elongated spine to which L12 dimers bind in a sequential fashion forming a multimeric L10(L12)X complex.

Its function is as follows. Forms part of the ribosomal stalk, playing a central role in the interaction of the ribosome with GTP-bound translation factors. The chain is Large ribosomal subunit protein uL10 from Xanthobacter autotrophicus (strain ATCC BAA-1158 / Py2).